Reading from the N-terminus, the 78-residue chain is Protein EcdD (78 aa).

Its function is as follows. Involved in the non-oxidative decarboxylation and detoxification of phenolic derivatives under anaerobic conditions, however the precise biochemical function in metabolism of phenolic acid is unknown. The protein is Protein EcdD of Escherichia coli O157:H7.